We begin with the raw amino-acid sequence, 183 residues long: Glutathione-regulated potassium-efflux system ancillary protein KefG (183 aa).

This sequence belongs to the NAD(P)H dehydrogenase (quinone) family. KefG subfamily. As to quaternary structure, interacts with KefB.

The protein localises to the cell inner membrane. It carries out the reaction a quinone + NADH + H(+) = a quinol + NAD(+). It catalyses the reaction a quinone + NADPH + H(+) = a quinol + NADP(+). In terms of biological role, regulatory subunit of a potassium efflux system that confers protection against electrophiles. Required for full activity of KefB. This chain is Glutathione-regulated potassium-efflux system ancillary protein KefG, found in Pectobacterium atrosepticum (strain SCRI 1043 / ATCC BAA-672) (Erwinia carotovora subsp. atroseptica).